The primary structure comprises 1493 residues: Son of sevenless homolog (1493 aa).

The DH domain maps to 244-448 (TYESVAVDFL…ERVVGCVSDM (205 aa)). In terms of domain architecture, PH spans 496–606 (ELEKDGDLGM…WMAVLVKVTT (111 aa)). In terms of domain architecture, N-terminal Ras-GEF spans 656–824 (GIPVIKCGTV…TILALIEKRV (169 aa)). The Ras-GEF domain maps to 897–1164 (HPIEIGRQLT…YNKSLEIQPK (268 aa)). Disordered stretches follow at residues 1067 to 1091 (KSPP…DPEN), 1165 to 1248 (GLDT…DDAP), and 1263 to 1493 (HPKI…SSNK). A compositionally biased stretch (basic and acidic residues) spans 1079–1088 (QQKDDLKASD). Composition is skewed to polar residues over residues 1208–1231 (HSQN…NTPL) and 1279–1289 (SRANQSNSVSL). Positions 1308–1326 (STATSPTTLTTTTTPSSAG) are enriched in low complexity. Residues 1350–1361 (LTPSRDNSSPSA) show a composition bias toward polar residues. A compositionally biased stretch (low complexity) spans 1381 to 1400 (STSSDVSSSPSTSGSTSSAT). Basic and acidic residues predominate over residues 1402 to 1417 (ENQEQLRVIFDREESH). The span at 1426 to 1435 (PLPPALPPPR) shows a compositional bias: pro residues. The span at 1453–1464 (HNSNSPTLSSEQ) shows a compositional bias: polar residues.

Interacts with cmd-1 in the presence of Ca(2+).

Functionally, promotes the exchange of Ras-bound GDP by GTP. May regulate signaling pathways downstream of receptor tyrosine kinase, egl-15 and let-23. Required for larval and male spicule development, fluid homeostasis, vulva induction, spermatogenesis, and oogenesis by promoting meiosis prophase exit during oocyte maturation. Required for the delamination of G1 cell by promoting the loss of cell junctions and detachment from the excretory system during larval development. Plays a role in nicotinic acetylcholine receptor (nAChR)-mediated sensitivity to nicotine. Regulates synaptic levels of nAchR subunit lev-1 in the nerve cord. The sequence is that of Son of sevenless homolog from Caenorhabditis elegans.